A 518-amino-acid polypeptide reads, in one-letter code: Protein translocase subunit SecD (518 aa).

A run of 6 helical transmembrane segments spans residues 9–29, 361–381, 384–404, 406–426, 452–474, and 486–506; these read IFLSIICTVFAVICALPNFMQ, LIGFIAVCIFMVWSYGVLGLF, IALSLALLYILALLSLFQATL, LPGIAGIILTMGMAVDANVLI, FATILDANLTTLIVAFLLYIFGV, and IGIISSMFSAIIITKLLIDIW.

The protein belongs to the SecD/SecF family. SecD subfamily. In terms of assembly, forms a complex with SecF. Part of the essential Sec protein translocation apparatus which comprises SecA, SecYEG and auxiliary proteins SecDF-YajC and YidC.

The protein localises to the cell inner membrane. Part of the Sec protein translocase complex. Interacts with the SecYEG preprotein conducting channel. SecDF uses the proton motive force (PMF) to complete protein translocation after the ATP-dependent function of SecA. This Rickettsia conorii (strain ATCC VR-613 / Malish 7) protein is Protein translocase subunit SecD.